A 286-amino-acid chain; its full sequence is NAD kinase (286 aa).

Aspartate 67 (proton acceptor) is an active-site residue. NAD(+) is bound by residues 67-68, arginine 72, 141-142, arginine 152, aspartate 171, 182-187, and glutamine 242; these read DG, ND, and TAYSLS.

The protein belongs to the NAD kinase family. The cofactor is a divalent metal cation.

It localises to the cytoplasm. The catalysed reaction is NAD(+) + ATP = ADP + NADP(+) + H(+). In terms of biological role, involved in the regulation of the intracellular balance of NAD and NADP, and is a key enzyme in the biosynthesis of NADP. Catalyzes specifically the phosphorylation on 2'-hydroxyl of the adenosine moiety of NAD to yield NADP. The protein is NAD kinase of Ruminiclostridium cellulolyticum (strain ATCC 35319 / DSM 5812 / JCM 6584 / H10) (Clostridium cellulolyticum).